The sequence spans 253 residues: Ribonuclease HII (253 aa).

The region spanning 70 to 253 (DLIAGVDEVG…KTFAPIKDIL (184 aa)) is the RNase H type-2 domain. The a divalent metal cation site is built by D76, E77, and D168.

This sequence belongs to the RNase HII family. Mn(2+) is required as a cofactor. Mg(2+) serves as cofactor.

The protein localises to the cytoplasm. The catalysed reaction is Endonucleolytic cleavage to 5'-phosphomonoester.. In terms of biological role, endonuclease that specifically degrades the RNA of RNA-DNA hybrids. In Leuconostoc mesenteroides subsp. mesenteroides (strain ATCC 8293 / DSM 20343 / BCRC 11652 / CCM 1803 / JCM 6124 / NCDO 523 / NBRC 100496 / NCIMB 8023 / NCTC 12954 / NRRL B-1118 / 37Y), this protein is Ribonuclease HII.